A 1084-amino-acid chain; its full sequence is MAGNEWINGYLEAILDSGGAAGGGGGGGGGGGGGGGGGGGGGGGGVDPRSPAAGAASPRGPHMNFNPTHYFVEEVVKGVDESDLHRTWIKVVATRNARERSTRLENMCWRIWHLARKKKQLELEGILRISARRKEQEQVRRETSEDLAEDLFEGEKADTVGELAQQDTPMKKKFQRNFSELTVSWSDENKEKKLYIVLISLHGLVRGDNMELGRDSDTGGQVKYVVELARALAMMPGVYRVDLFTRQVSSPEVDWSYGEPTEMLTSGSTDGEGSGESAGAYIVRIPCGPRDKYLRKEALWPYLQEFVDGALAHILNMSKALGEQVSNGKLVLPYVIHGHYADAGDVAALLSGALNVPMVLTGHSLGRNKLEQIMKQGRMSKEEIDSTYKIMRRIEGEELALDAAELVITSTRQEIDEQWGLYDGFDVKLEKVLRARARRGVSCHGRFMPRMVVIPPGMDFSSVVVPEDTSDGDDGKDFEIASPRSLPPIWAEVMRFLTNPHKPMILALSRPDPKKNITTLVKAFGECRPLRELANLILIMGNRDDIDEMSAGNASVLTTVLKLIDKYDLYGSVAFPKHHKQSDVPEIYRLTGKMKGVFINPALVEPFGLTLIEAAAHGLPIVATKNGGPVDIKNALNNGLLVDPHDQHAIADALLKLVADKNLWQECRKNGLRNIQLYSWPEHCRTYLTRIAGCRIRNPRWLMDTPADAAAEEEEALEDSLMDVQDLSLRLSIDGERGSSMNDAPSSDPQDSVQRIMNKIKRSSPADTDGAKIPAEAAATATSGAMNKYPLLRRRRRLFVIAVDCYGDDGSASKRMLQVIQEVFRAVRSDSQMSRISGFALSTAMPLPETLKLLQLGKIPPTDFDALICGSGSEVYYPSTAQCVDAGGRLRPDQDYLLHINHRWSHDGAKQTIAKLAHDGSGTNVEPDVESCNPHCVSFFIKDPNKVRTIDEMRERVRMRGLRCHLMYCRNATRLQVVPLLASRSQALRYLFVRWGLSVGNMYLIVGEHGDTDHEEMLSGLHKTVIIRGVTEKGSEQLVRSSGSYQREDVVPSESPLIAFTKGDLKADEIMRALKEVTKAASGM.

Over residues 25–46 (GGGGGGGGGGGGGGGGGGGGGV) the composition is skewed to gly residues. The segment at 25–61 (GGGGGGGGGGGGGGGGGGGGGVDPRSPAAGAASPRGP) is disordered. The segment covering 48–61 (PRSPAAGAASPRGP) has biased composition (low complexity).

The protein belongs to the glycosyltransferase 1 family. Homodimer or homotetramer. Expressed in leaves mesophyll cells, scutellum of germinating seedlings and pollen of immature inflorescences.

The enzyme catalyses beta-D-fructose 6-phosphate + UDP-alpha-D-glucose = sucrose 6(F)-phosphate + UDP + H(+). Its pathway is glycan biosynthesis; sucrose biosynthesis; sucrose from D-fructose 6-phosphate and UDP-alpha-D-glucose: step 1/2. Its activity is regulated as follows. Activity is regulated by phosphorylation and moderated by concentration of metabolites and light. Functionally, plays a role in photosynthetic sucrose synthesis by catalyzing the rate-limiting step of sucrose biosynthesis from UDP-glucose and fructose- 6-phosphate. Involved in the regulation of carbon partitioning in the leaves of plants. May regulate the synthesis of sucrose and therefore play a major role as a limiting factor in the export of photoassimilates out of the leaf. Plays a role for sucrose availability that is essential for plant growth and fiber elongation. This chain is Probable sucrose-phosphate synthase 1 (SPS1), found in Oryza sativa subsp. indica (Rice).